Consider the following 626-residue polypeptide: MSKKGRSKGEKPETETDSVQMANEELRAKLTNIQIEFQQEKSKVGKLRERLQEAKLEREQEQRRHTAYISELKAKLHEEKTKELQALREALIRQHEQEAARTAKIKEGELQRLQATLNVLRDGAADKVKTALLADAREEARRTFDGERQRLQQEILELKAARKQAEEALSNCMQADKAKAADLRAAYQAHQDEVHRIKRECERDIRRLMDEIKGKERVILALEKELGVQAGQTQRLLLQKEALDEQLVQVKEAERHHSSPKRELPPGIGDMAELMGGQDQHMDERDVRRFQLKIAELNSVIRKLEDRNTLLADERNELLKRSRETEVQLKPLVEKNKRMNKKNEDLLHSIQRMEEKLKSLTRENVEMKEKLSAQASLKRHTSLNDLSLTRDEQEIEFLRLQVLEQQHVIDDLSLERERLLRSKRHRGKSLKPPKKHVVETFFGFDEESVDSETLSETSYNTDRTDRTPATPEEDLDETTTREEADLRFCQLTREYQALQRAYALLQEQVGGTLDAEREARTREQLQADLLRCQAKIEDLEKLLVEKGQDAAWVEEKQVLMRTNQDLLEKIYRLEMEENQLKSEMQDAKDQNELLEFRVLELEVRDSICCKLSNGADILFEPKLKFV.

The tract at residues 1–25 (MSKKGRSKGEKPETETDSVQMANEE) is disordered. The mediates association with microtubules stretch occupies residues 1 to 365 (MSKKGRSKGE…KLKSLTRENV (365 aa)). Coiled coils occupy residues 13–255 (ETET…EAER) and 284–413 (ERDV…DDLS). The mediates interaction with TYK2 and GABBR1 stretch occupies residues 365–626 (VEMKEKLSAQ…ILFEPKLKFV (262 aa)). S382 is subject to Phosphoserine. Positions 452 to 461 (ETLSETSYNT) are enriched in polar residues. The disordered stretch occupies residues 452-481 (ETLSETSYNTDRTDRTPATPEEDLDETTTR). T470 is subject to Phosphothreonine. Residues 490–604 (QLTREYQALQ…EFRVLELEVR (115 aa)) are a coiled coil.

It belongs to the JAKMIP family. As to quaternary structure, homodimer. Interacts with JAK1 and TYK2. Forms a complex with GABBR1 and KIF5B/kinesin-1. Phosphorylated. As to expression, specifically expressed in brain and testis by spermatogonia, spermatocytes, spermatozoa and Sertoli cells (at protein level).

Its subcellular location is the cytoplasm. It is found in the cytoskeleton. The protein localises to the membrane. In terms of biological role, associates with microtubules and may play a role in the microtubule-dependent transport of the GABA-B receptor. May play a role in JAK1 signaling and regulate microtubule cytoskeleton rearrangements. This is Janus kinase and microtubule-interacting protein 1 (Jakmip1) from Rattus norvegicus (Rat).